The following is a 147-amino-acid chain: Large ribosomal subunit protein uL15 (147 aa).

The interval 1–42 is disordered; it reads MTIKVHHLRPAPGAKTAKTRVGRGEGSKGKTAGRGTKGSKAR.

The protein belongs to the universal ribosomal protein uL15 family. Part of the 50S ribosomal subunit.

Functionally, binds to the 23S rRNA. This chain is Large ribosomal subunit protein uL15, found in Salinispora arenicola (strain CNS-205).